We begin with the raw amino-acid sequence, 361 residues long: Protein RecA (361 aa).

77–84 (GPESSGKT) provides a ligand contact to ATP.

The protein belongs to the RecA family.

The protein localises to the cytoplasm. Can catalyze the hydrolysis of ATP in the presence of single-stranded DNA, the ATP-dependent uptake of single-stranded DNA by duplex DNA, and the ATP-dependent hybridization of homologous single-stranded DNAs. It interacts with LexA causing its activation and leading to its autocatalytic cleavage. The sequence is that of Protein RecA from Rhizobium rhizogenes (strain K84 / ATCC BAA-868) (Agrobacterium radiobacter).